The primary structure comprises 429 residues: UDP-N-acetylglucosamine 1-carboxyvinyltransferase (429 aa).

22–23 provides a ligand contact to phosphoenolpyruvate; the sequence is KN. Arg-102 contacts UDP-N-acetyl-alpha-D-glucosamine. The Proton donor role is filled by Cys-126. Cys-126 bears the 2-(S-cysteinyl)pyruvic acid O-phosphothioketal mark. UDP-N-acetyl-alpha-D-glucosamine-binding positions include 131–135, Asp-316, and Ile-338; that span reads RPVDL.

This sequence belongs to the EPSP synthase family. MurA subfamily.

The protein localises to the cytoplasm. The catalysed reaction is phosphoenolpyruvate + UDP-N-acetyl-alpha-D-glucosamine = UDP-N-acetyl-3-O-(1-carboxyvinyl)-alpha-D-glucosamine + phosphate. Its pathway is cell wall biogenesis; peptidoglycan biosynthesis. Cell wall formation. Adds enolpyruvyl to UDP-N-acetylglucosamine. In Methylobacterium sp. (strain 4-46), this protein is UDP-N-acetylglucosamine 1-carboxyvinyltransferase.